The sequence spans 364 residues: Acidic fibroblast growth factor intracellular-binding protein (364 aa).

Threonine 2 carries the post-translational modification N-acetylthreonine.

As to quaternary structure, binds to internalized FGF1; this interaction is increased in the presence of CSNKB, suggesting a possible cooperative interaction between CSNKB and FIBP in binding to FGF1. Highly expressed in heart, skeletal muscle and pancreas. Expressed at lower levels in brain. Also found in placenta, liver and kidney.

It is found in the nucleus. It localises to the endomembrane system. May be involved in mitogenic function of FGF1. May mediate with IER2 FGF-signaling in the establishment of laterality in the embryo. This is Acidic fibroblast growth factor intracellular-binding protein (FIBP) from Homo sapiens (Human).